A 264-amino-acid polypeptide reads, in one-letter code: uncharacterized protein (264 aa).

The N-terminal stretch at Met1–Ala22 is a signal peptide. Residues Leu227–Tyr247 form a helical membrane-spanning segment.

Its subcellular location is the membrane. This is an uncharacterized protein from Bacillus subtilis (strain 168).